A 925-amino-acid polypeptide reads, in one-letter code: Eukaryotic translation initiation factor 3 subunit A (925 aa).

The segment at 108-127 (QAQTDAKEESNKDQAEEDLE) is disordered. Residues 112–121 (DAKEESNKDQ) show a composition bias toward basic and acidic residues. The 175-residue stretch at 324-498 (FKFYSSQFVL…DTVSFAQDPF (175 aa)) folds into the PCI domain. 2 disordered regions span residues 509–544 (PESS…FTRN) and 839–925 (KEAL…AGRG). Coiled coils occupy residues 534-666 (EEQN…MKKL) and 785-885 (SVIA…SSRS). Over residues 839–880 (KEALAKEEELAKRRAERERINKERDEIARKQREIEELLEKKN) the composition is skewed to basic and acidic residues. The segment covering 916–925 (RLKRMNAGRG) has biased composition (basic residues).

It belongs to the eIF-3 subunit A family. In terms of assembly, component of the eukaryotic translation initiation factor 3 (eIF-3) complex.

It is found in the cytoplasm. Its function is as follows. RNA-binding component of the eukaryotic translation initiation factor 3 (eIF-3) complex, which is involved in protein synthesis of a specialized repertoire of mRNAs and, together with other initiation factors, stimulates binding of mRNA and methionyl-tRNAi to the 40S ribosome. The eIF-3 complex specifically targets and initiates translation of a subset of mRNAs involved in cell proliferation. This is Eukaryotic translation initiation factor 3 subunit A from Kluyveromyces lactis (strain ATCC 8585 / CBS 2359 / DSM 70799 / NBRC 1267 / NRRL Y-1140 / WM37) (Yeast).